Here is a 380-residue protein sequence, read N- to C-terminus: E3 ubiquitin-protein ligase PHF7 (380 aa).

The interval 1–23 (MRTIKEKKEHPRLRKTARTKKVT) is disordered. A compositionally biased stretch (basic residues) spans 10 to 23 (HPRLRKTARTKKVT). The C2HC pre-PHD-type zinc-finger motif lies at 30–68 (GPVCLLCFQEPGDPEKLGEFLQKDNLCVHYFCLILSSKL). 4 residues coordinate Zn(2+): Cys33, Cys36, His58, and Cys61. The required for interaction and ubiquitination of the nucleosome core particle stretch occupies residues 67–92 (KLPQKGQPNRGLHGFMPEDIKKEAAR). The segment at 96-145 (KVCFVCKRKGAAIRCQKDQCVQNFHLPCGQERGCLSQFFGEYKSYCGKHR) adopts a PHD-type zinc-finger fold. Residues Cys98, Cys101, Cys110, Cys115, His120, Cys123, Cys141, His144, Cys159, Cys162, Cys178, Cys179, His185, Cys188, Cys203, Cys206, Cys247, Cys252, Cys272, Cys275, His281, Cys284, Cys296, and Cys299 each contribute to the Zn(2+) site. The tract at residues 150-306 (IHQRSFGESC…NECLPASTED (157 aa)) is required for interaction with ubiquitinated UBE2D2. The RING-type; degenerate zinc-finger motif lies at 159–207 (CVLCCEDLSRASVENIRSPCCSQAIYHRKCIQKYAHTSAKHFFKCPQCN). The required for association with and ubiquitination of H3 stretch occupies residues 243–300 (RYQHCDAPICLYEQGRDSFEDEGRWRLILCATCGSHGTHRDCSSLRPNSKKWECNECL). Low complexity predominate over residues 352 to 367 (EKPESSSGSSCQSWRS). A disordered region spans residues 352-380 (EKPESSSGSSCQSWRSKGIKVTKDCKKSK).

In terms of assembly, interacts with MEF2C; the interaction promotes MEF2C binding to its transcription targets. Interacts with GATA4; the interaction promotes GATA4 binding to its transcription targets. Interacts with UBE2D2; the interaction inhibits cleavage of PHF7 and promotes association of the complex with the nucleosome core particle.

It is found in the nucleus. The enzyme catalyses S-ubiquitinyl-[E2 ubiquitin-conjugating enzyme]-L-cysteine + [acceptor protein]-L-lysine = [E2 ubiquitin-conjugating enzyme]-L-cysteine + N(6)-ubiquitinyl-[acceptor protein]-L-lysine.. Its pathway is protein modification; protein ubiquitination. E3 ubiquitin-protein ligase which ubiquitinates histone H3 at 'Lys-14'. Required for male fertility, via inhibition of SPOP-mediated BRDT degradation when in the presence of acetylated histone H4 in early condensing spermatids. Stabilization of BRDT allows it to facilitate histone removal in early condensing spermatids and promote the progression of histone-to-protamine exchange. Promotes the expression of steroidogenesis proteins in the testes, and as a result plays a role in maintaining testosterone levels and repressing osteoclastogenesis. Promotes transcription of cardiac enhancer genes by facilitating binding of cardiac transcription factors such as MEF2C and GATA4 to target gene promoters. Ubiquitinates histone H4. Ubiquitinates histone H2A and H3 as part of the nucleosome core particle. This chain is E3 ubiquitin-protein ligase PHF7, found in Rattus norvegicus (Rat).